A 125-amino-acid polypeptide reads, in one-letter code: Small ribosomal subunit protein uS13 (125 aa).

A disordered region spans residues 90 to 125 (QRHRKGLPVRGQRTKTNARTRKGPKRTVAGKKKATK).

This sequence belongs to the universal ribosomal protein uS13 family. Part of the 30S ribosomal subunit. Forms a loose heterodimer with protein S19. Forms two bridges to the 50S subunit in the 70S ribosome.

In terms of biological role, located at the top of the head of the 30S subunit, it contacts several helices of the 16S rRNA. In the 70S ribosome it contacts the 23S rRNA (bridge B1a) and protein L5 of the 50S subunit (bridge B1b), connecting the 2 subunits; these bridges are implicated in subunit movement. Contacts the tRNAs in the A and P-sites. This Bifidobacterium longum (strain DJO10A) protein is Small ribosomal subunit protein uS13.